The sequence spans 64 residues: MGMRMMFTVFLLVVLTTTVVSFPSDSASDVRDDEAKDERSDMYKSKRNGRCCHPACGKHFSCGR.

An N-terminal signal peptide occupies residues 1–21 (MGMRMMFTVFLLVVLTTTVVS). Residues 22–47 (FPSDSASDVRDDEAKDERSDMYKSKR) constitute a propeptide that is removed on maturation. Asn-48 is subject to Deamidated asparagine; in CnIH; partial. Disulfide bonds link Cys-51/Cys-56 and Cys-52/Cys-62. The residue at position 62 (Cys-62) is a Cysteine amide.

The protein belongs to the conotoxin A superfamily. Expressed by the venom duct.

It is found in the secreted. Its function is as follows. Alpha-conotoxins act on postsynaptic membranes, they bind to the nicotinic acetylcholine receptors (nAChR) and thus inhibit them. The polypeptide is Alpha-conotoxin CnIC (Conus consors (Singed cone)).